The sequence spans 473 residues: Protein translocase subunit SecD (473 aa).

The next 6 helical transmembrane spans lie at 5-25 (VLVK…LLYP), 316-336 (ASLY…KSGG), 337-357 (IISN…MAAF), 364-384 (PGIA…VLIL), 409-429 (WSAI…LFQF), and 436-456 (GFAV…VFVT).

The protein belongs to the SecD/SecF family. SecD subfamily. Forms a complex with SecF. Part of the essential Sec protein translocation apparatus which comprises SecA, SecYEG and auxiliary proteins SecDF. Other proteins may also be involved.

It is found in the cell inner membrane. In terms of biological role, part of the Sec protein translocase complex. Interacts with the SecYEG preprotein conducting channel. SecDF uses the proton motive force (PMF) to complete protein translocation after the ATP-dependent function of SecA. The polypeptide is Protein translocase subunit SecD (Elusimicrobium minutum (strain Pei191)).